Reading from the N-terminus, the 208-residue chain is UPF0637 protein lp_2332 (208 aa).

It belongs to the UPF0637 family.

This chain is UPF0637 protein lp_2332, found in Lactiplantibacillus plantarum (strain ATCC BAA-793 / NCIMB 8826 / WCFS1) (Lactobacillus plantarum).